The following is a 101-amino-acid chain: Citrate lyase acyl carrier protein (101 aa).

O-(phosphoribosyl dephospho-coenzyme A)serine is present on Ser14.

Belongs to the CitD family. Oligomer with a subunit composition of (alpha,beta,gamma)6.

The protein resides in the cytoplasm. Functionally, covalent carrier of the coenzyme of citrate lyase. The sequence is that of Citrate lyase acyl carrier protein from Streptococcus uberis (strain ATCC BAA-854 / 0140J).